A 598-amino-acid chain; its full sequence is Arginine--tRNA ligase (598 aa).

The 'HIGH' region signature appears at 139 to 149 (ANPTGPMHVGH).

Belongs to the class-I aminoacyl-tRNA synthetase family. Monomer.

The protein resides in the cytoplasm. The catalysed reaction is tRNA(Arg) + L-arginine + ATP = L-arginyl-tRNA(Arg) + AMP + diphosphate. This is Arginine--tRNA ligase from Bradyrhizobium sp. (strain ORS 278).